The chain runs to 457 residues: Probable mitochondrial-processing peptidase subunit beta (457 aa).

Histidine 66 serves as a coordination point for Zn(2+). Glutamate 69 functions as the Proton acceptor in the catalytic mechanism. 2 residues coordinate Zn(2+): histidine 70 and glutamate 146.

This sequence belongs to the peptidase M16 family. In terms of assembly, heterodimer of mas2 (alpha) and qcr1 (beta) subunits, forming the mitochondrial processing protease (MPP) in which mas2 is involved in substrate recognition and binding and qcr1 is the catalytic subunit. The cofactor is Zn(2+).

It localises to the mitochondrion matrix. It carries out the reaction Release of N-terminal transit peptides from precursor proteins imported into the mitochondrion, typically with Arg in position P2.. Its activity is regulated as follows. Binding to mas2 is required for catalytic activity. In terms of biological role, catalytic subunit of the essential mitochondrial processing protease (MPP), which cleaves the mitochondrial sequence off newly imported precursors proteins. Preferentially, cleaves after an arginine at position P2. The sequence is that of Probable mitochondrial-processing peptidase subunit beta (qcr1) from Schizosaccharomyces pombe (strain 972 / ATCC 24843) (Fission yeast).